A 545-amino-acid polypeptide reads, in one-letter code: Adenine deaminase (545 aa).

It belongs to the metallo-dependent hydrolases superfamily. Adenine deaminase family. The cofactor is Mn(2+).

It carries out the reaction adenine + H2O + H(+) = hypoxanthine + NH4(+). The sequence is that of Adenine deaminase from Salinibacter ruber (strain DSM 13855 / M31).